Reading from the N-terminus, the 125-residue chain is Succinate dehydrogenase assembly factor 3, mitochondrial (125 aa).

A mitochondrion-targeting transit peptide spans 1 to 30 (MPGRHVSRVRALYKRVLQLHRVLPPDLKSL).

The protein belongs to the complex I LYR family. SDHAF3 subfamily. In terms of assembly, interacts with SDHB within an SDHA-SDHB subcomplex.

It localises to the mitochondrion matrix. Plays an essential role in the assembly of succinate dehydrogenase (SDH), an enzyme complex (also referred to as respiratory complex II) that is a component of both the tricarboxylic acid (TCA) cycle and the mitochondrial electron transport chain, and which couples the oxidation of succinate to fumarate with the reduction of ubiquinone (coenzyme Q) to ubiquinol. Promotes maturation of the iron-sulfur protein subunit SDHB of the SDH catalytic dimer, protecting it from the deleterious effects of oxidants. May act together with SDHAF1. The chain is Succinate dehydrogenase assembly factor 3, mitochondrial from Homo sapiens (Human).